The following is a 417-amino-acid chain: NADH-quinone oxidoreductase subunit D (417 aa).

The protein belongs to the complex I 49 kDa subunit family. In terms of assembly, NDH-1 is composed of 14 different subunits. Subunits NuoB, C, D, E, F, and G constitute the peripheral sector of the complex.

The protein resides in the cell inner membrane. The catalysed reaction is a quinone + NADH + 5 H(+)(in) = a quinol + NAD(+) + 4 H(+)(out). Functionally, NDH-1 shuttles electrons from NADH, via FMN and iron-sulfur (Fe-S) centers, to quinones in the respiratory chain. The immediate electron acceptor for the enzyme in this species is believed to be ubiquinone. Couples the redox reaction to proton translocation (for every two electrons transferred, four hydrogen ions are translocated across the cytoplasmic membrane), and thus conserves the redox energy in a proton gradient. The protein is NADH-quinone oxidoreductase subunit D of Leptothrix cholodnii (strain ATCC 51168 / LMG 8142 / SP-6) (Leptothrix discophora (strain SP-6)).